The chain runs to 154 residues: Endoribonuclease YbeY (154 aa).

Residues H113, H117, and H123 each contribute to the Zn(2+) site.

It belongs to the endoribonuclease YbeY family. Zn(2+) is required as a cofactor.

The protein resides in the cytoplasm. Its function is as follows. Single strand-specific metallo-endoribonuclease involved in late-stage 70S ribosome quality control and in maturation of the 3' terminus of the 16S rRNA. This chain is Endoribonuclease YbeY, found in Aeromonas hydrophila subsp. hydrophila (strain ATCC 7966 / DSM 30187 / BCRC 13018 / CCUG 14551 / JCM 1027 / KCTC 2358 / NCIMB 9240 / NCTC 8049).